A 382-amino-acid polypeptide reads, in one-letter code: Intermediate transcription factor 3 large subunit (382 aa).

The protein belongs to the poxviruses A23 family. As to quaternary structure, heterodimer of a 45 kDa and a 32 kDa subunit.

Its function is as follows. Acts with RNA polymerase to initiate transcription from intermediate gene promoters. This chain is Intermediate transcription factor 3 large subunit (VITF3L), found in Monkeypox virus (strain Zaire-96-I-16) (MPX).